A 185-amino-acid polypeptide reads, in one-letter code: dCTP deaminase (185 aa).

DCTP contacts are provided by residues 108 to 113, 132 to 134, glutamine 153, tyrosine 167, and glutamine 177; these read KSTYAR and TLE. Catalysis depends on glutamate 134, which acts as the Proton donor/acceptor.

Belongs to the dCTP deaminase family. As to quaternary structure, homotrimer.

The enzyme catalyses dCTP + H2O + H(+) = dUTP + NH4(+). The protein operates within pyrimidine metabolism; dUMP biosynthesis; dUMP from dCTP (dUTP route): step 1/2. Its function is as follows. Catalyzes the deamination of dCTP to dUTP. In Pelagibacter ubique (strain HTCC1062), this protein is dCTP deaminase.